A 790-amino-acid polypeptide reads, in one-letter code: cAMP and cAMP-inhibited cGMP 3',5'-cyclic phosphodiesterase 10A (790 aa).

3',5'-cyclic AMP-binding positions include 290 to 291 (RC), 334 to 335 (IA), threonine 368, glutamine 387, and histidine 519. In terms of domain architecture, PDEase spans 446–763 (TSEEWQGLMR…NQWEKVIRGE (318 aa)). Residue histidine 519 is the Proton donor of the active site. Histidine 519 contributes to the 3',5'-cyclic GMP binding site. The a divalent metal cation site is built by histidine 523, histidine 557, aspartate 558, and aspartate 668. Glutamine 720 contributes to the 3',5'-cyclic AMP binding site. Glutamine 720 is a 3',5'-cyclic GMP binding site. The tract at residues 768 to 790 (WISGPGPAPSKSTPEKLNVKVED) is disordered. Over residues 780-790 (TPEKLNVKVED) the composition is skewed to basic and acidic residues.

Belongs to the cyclic nucleotide phosphodiesterase family. In terms of assembly, homodimer. The cofactor is a divalent metal cation. In terms of tissue distribution, detected in striatum (at protein level). Detected in testis and brain.

Its subcellular location is the cytoplasm. The protein resides in the cytosol. The enzyme catalyses a nucleoside 3',5'-cyclic phosphate + H2O = a nucleoside 5'-phosphate + H(+). It carries out the reaction 3',5'-cyclic AMP + H2O = AMP + H(+). It catalyses the reaction 3',5'-cyclic GMP + H2O = GMP + H(+). The protein operates within purine metabolism; 3',5'-cyclic AMP degradation; AMP from 3',5'-cyclic AMP: step 1/1. It functions in the pathway purine metabolism; 3',5'-cyclic GMP degradation; GMP from 3',5'-cyclic GMP: step 1/1. Plays a role in signal transduction by regulating the intracellular concentration of cyclic nucleotides. Can hydrolyze both cAMP and cGMP, but has higher affinity for cAMP and is more efficient with cAMP as substrate. May play a critical role in regulating cAMP and cGMP levels in the striatum, a region of the brain that contributes to the control of movement and cognition. The sequence is that of cAMP and cAMP-inhibited cGMP 3',5'-cyclic phosphodiesterase 10A (Pde10a) from Mus musculus (Mouse).